The chain runs to 395 residues: DNA polymerase IV (395 aa).

A UmuC domain is found at 7–187 (FFHVDIDAFF…LPLKDVWGVG (181 aa)). Residues Asp11 and Asp105 each contribute to the Mg(2+) site. Glu106 is an active-site residue.

Belongs to the DNA polymerase type-Y family. Monomer. Mg(2+) is required as a cofactor.

It is found in the cytoplasm. It catalyses the reaction DNA(n) + a 2'-deoxyribonucleoside 5'-triphosphate = DNA(n+1) + diphosphate. Its function is as follows. Poorly processive, error-prone DNA polymerase involved in untargeted mutagenesis. Copies undamaged DNA at stalled replication forks, which arise in vivo from mismatched or misaligned primer ends. These misaligned primers can be extended by PolIV. Exhibits no 3'-5' exonuclease (proofreading) activity. May be involved in translesional synthesis, in conjunction with the beta clamp from PolIII. This Treponema denticola (strain ATCC 35405 / DSM 14222 / CIP 103919 / JCM 8153 / KCTC 15104) protein is DNA polymerase IV.